Consider the following 501-residue polypeptide: Lycopene beta cyclase, chloroplastic (501 aa).

A chloroplast-targeting transit peptide spans 1–48 (MDTLLKTPNKLDFFIPQFHGFERLCSNNPYHSRVRLGVKKRAIKIVSS). Val-49 is subject to N-acetylvaline. Residue 85–113 (LAIVGGGPAGLAVAQQVSEAGLSVCSIDP) participates in NAD(+) binding.

Belongs to the lycopene cyclase family.

The protein resides in the plastid. It localises to the chloroplast. It carries out the reaction a carotenoid psi-end group = a carotenoid beta-end derivative. It functions in the pathway carotenoid biosynthesis; beta-carotene biosynthesis. The protein operates within carotenoid biosynthesis; beta-zeacarotene biosynthesis. Its function is as follows. Involved in carotenoid biosynthesis. Catalyzes the double cyclization reaction which converts lycopene to beta-carotene and neurosporene to beta-zeacarotene. Major lycopene beta-cyclase that does not seem to be involved in neoxanthin synthesis. Involved in salt tolerance improvement by increasing synthesis of carotenoids, which impairs reactive oxygen species (ROS) and protects the photosynthetic system under salt stress. This chain is Lycopene beta cyclase, chloroplastic, found in Arabidopsis thaliana (Mouse-ear cress).